The sequence spans 89 residues: Small ribosomal subunit protein uS14A (89 aa).

Residues 29 to 62 (AAGDRTALAKLPRDSNPNRLRLRDQTDGRPRGYM) form a disordered region. Over residues 49-58 (RLRDQTDGRP) the composition is skewed to basic and acidic residues.

The protein belongs to the universal ribosomal protein uS14 family. Part of the 30S ribosomal subunit. Contacts proteins S3 and S10.

Functionally, binds 16S rRNA, required for the assembly of 30S particles and may also be responsible for determining the conformation of the 16S rRNA at the A site. This Enterococcus faecalis (strain ATCC 700802 / V583) protein is Small ribosomal subunit protein uS14A.